The primary structure comprises 107 residues: Nucleoid-associated protein A1G_07310 (107 aa).

Belongs to the YbaB/EbfC family. Homodimer.

The protein localises to the cytoplasm. It is found in the nucleoid. Functionally, binds to DNA and alters its conformation. May be involved in regulation of gene expression, nucleoid organization and DNA protection. In Rickettsia rickettsii (strain Sheila Smith), this protein is Nucleoid-associated protein A1G_07310.